Here is a 508-residue protein sequence, read N- to C-terminus: ATP synthase subunit alpha, chloroplastic (508 aa).

170–177 (GDRQTGKT) lines the ATP pocket.

Belongs to the ATPase alpha/beta chains family. As to quaternary structure, F-type ATPases have 2 components, CF(1) - the catalytic core - and CF(0) - the membrane proton channel. CF(1) has five subunits: alpha(3), beta(3), gamma(1), delta(1), epsilon(1). CF(0) has four main subunits: a, b, b' and c.

The protein resides in the plastid. It is found in the chloroplast thylakoid membrane. It carries out the reaction ATP + H2O + 4 H(+)(in) = ADP + phosphate + 5 H(+)(out). Its function is as follows. Produces ATP from ADP in the presence of a proton gradient across the membrane. The alpha chain is a regulatory subunit. This is ATP synthase subunit alpha, chloroplastic from Lactuca sativa (Garden lettuce).